A 383-amino-acid chain; its full sequence is Aquaporin-5 (383 aa).

Residues 1–46 (MSVTTLNGQPTLNISGPGQTALSRLDPLKKVFTKFFSSIPQKVRGH) are Cytoplasmic-facing. The helical transmembrane segment at 47–67 (VVAVIGELIGTTAFLFIAFSA) threads the bilayer. Residues 68–93 (AEVALASANDNKGDKVSYETKSISTT) are Extracellular-facing. The helical transmembrane segment at 94–114 (QILFIAFGAGISLVVNAWTFF) threads the bilayer. Arginine 115 is a topological domain (cytoplasmic). Residues 116–136 (ISGGLFDPAVSIALFFVGAID) form a helical membrane-spanning segment. Positions 122 to 124 (DPA) match the NPA 1 motif. Topologically, residues 137 to 140 (LTRC) are extracellular. Residues 141-161 (VLLCIAQCLGAIAASAMAYGL) form a helical membrane-spanning segment. Over 162–180 (YHGGLHTATTLKPGMSPAQ) the chain is Cytoplasmic. Residues 181–201 (GVIVEMILTCQLCFTVLMLAA) form a helical membrane-spanning segment. The Extracellular segment spans residues 202-207 (EKHEAT). The helical transmembrane segment at 208–228 (FLAPLGIGLSVFIGELAGVFW) threads the bilayer. The Cytoplasmic portion of the chain corresponds to 229-252 (TGGSMNPARSLGPAVVTLSFPSYH). The NPA 2 motif lies at 234–236 (NPA). A helical transmembrane segment spans residues 253 to 273 (WIYWVGPIAGAGLASIIYKLI). The Extracellular portion of the chain corresponds to 274–383 (KALEYETAQL…DGFFGEMYAD (110 aa)). Positions 332 to 349 (ARKSSSLVPTKSTKSGNS) are enriched in polar residues. Residues 332–383 (ARKSSSLVPTKSTKSGNSEVKKTETVVEEPAKTQPKPAPAADDGFFGEMYAD) are disordered. Residues 350–362 (EVKKTETVVEEPA) are compositionally biased toward basic and acidic residues. Residues 363-372 (KTQPKPAPAA) show a composition bias toward low complexity.

Belongs to the MIP/aquaporin (TC 1.A.8) family.

The protein resides in the membrane. It carries out the reaction H2O(in) = H2O(out). Its function is as follows. Water channel required to facilitate the transport of water across membranes. May play a role in the vegetative growth. This is Aquaporin-5 from Botryotinia fuckeliana (strain B05.10) (Noble rot fungus).